An 87-amino-acid chain; its full sequence is Phosphoribosyl-ATP pyrophosphatase (87 aa).

It belongs to the PRA-PH family.

It localises to the cytoplasm. It carries out the reaction 1-(5-phospho-beta-D-ribosyl)-ATP + H2O = 1-(5-phospho-beta-D-ribosyl)-5'-AMP + diphosphate + H(+). Its pathway is amino-acid biosynthesis; L-histidine biosynthesis; L-histidine from 5-phospho-alpha-D-ribose 1-diphosphate: step 2/9. The protein is Phosphoribosyl-ATP pyrophosphatase (hisE) of Corynebacterium glutamicum (strain ATCC 13032 / DSM 20300 / JCM 1318 / BCRC 11384 / CCUG 27702 / LMG 3730 / NBRC 12168 / NCIMB 10025 / NRRL B-2784 / 534).